Reading from the N-terminus, the 81-residue chain is Escargot/snail protein homolog (81 aa).

4 C2H2-type zinc fingers span residues 1–5, 17–39, 43–65, and 71–81; these read HQQFH, FSCKYCEKVYVSLGALKMHIRTH, CKCHLCGKAFSRPWLLQGHIRTH, and FSCQHCNRAFA.

It belongs to the snail C2H2-type zinc-finger protein family.

Its subcellular location is the nucleus. The chain is Escargot/snail protein homolog from Apis mellifera (Honeybee).